Reading from the N-terminus, the 294-residue chain is Proteasome subunit beta (294 aa).

The propeptide at 1–65 (MTADRPALRT…MESGDLAPHG (65 aa)) is removed in mature form; by autocatalysis. Catalysis depends on Thr-66, which acts as the Nucleophile.

It belongs to the peptidase T1B family. The 20S proteasome core is composed of 14 alpha and 14 beta subunits that assemble into four stacked heptameric rings, resulting in a barrel-shaped structure. The two inner rings, each composed of seven catalytic beta subunits, are sandwiched by two outer rings, each composed of seven alpha subunits. The catalytic chamber with the active sites is on the inside of the barrel. Has a gated structure, the ends of the cylinder being occluded by the N-termini of the alpha-subunits. Is capped by the proteasome-associated ATPase, ARC.

The protein localises to the cytoplasm. It carries out the reaction Cleavage of peptide bonds with very broad specificity.. It participates in protein degradation; proteasomal Pup-dependent pathway. The formation of the proteasomal ATPase ARC-20S proteasome complex, likely via the docking of the C-termini of ARC into the intersubunit pockets in the alpha-rings, may trigger opening of the gate for substrate entry. Interconversion between the open-gate and close-gate conformations leads to a dynamic regulation of the 20S proteasome proteolysis activity. Its function is as follows. Component of the proteasome core, a large protease complex with broad specificity involved in protein degradation. In Rhodococcus opacus (strain B4), this protein is Proteasome subunit beta.